Here is a 1535-residue protein sequence, read N- to C-terminus: CLIP-associating protein 1 (1535 aa).

2 HEAT repeats span residues 87–124 and 163–200; these read AQIG…QAAN and LTLS…HVGE. Positions 237–290 are disordered; the sequence is NEKNFDDEDSVDGNRPSSASSSSSKAPSSSRRNVNLGTTRRLMSSSLGSKSSAA. A Phosphoserine modification is found at S246. Residues 252–266 show a composition bias toward low complexity; sequence PSSASSSSSKAPSSS. The segment covering 267-279 has biased composition (polar residues); the sequence is RRNVNLGTTRRLM. Over residues 280–290 the composition is skewed to low complexity; that stretch reads SSSLGSKSSAA. 2 HEAT repeats span residues 405–440 and 441–477; these read HGAE…IRHT and HIPR…EWQT. Disordered regions lie at residues 543-600 and 612-782; these read SDSI…RSRS and SKVS…GRIP. 5 positions are modified to phosphoserine: S545, S548, S558, S559, and S568. Over residues 548 to 567 the composition is skewed to low complexity; sequence SLPQSDRSSSSSQESLNRPL. Residues 579–594 are compositionally biased toward low complexity; the sequence is SRGSTVSTKSVSTTGS. A Phosphoserine modification is found at S600. Residues 612 to 633 are compositionally biased toward low complexity; it reads SKVSSSSGSPAFSSAAALPPGS. Phosphoserine occurs at positions 636, 646, 647, and 649. The segment covering 645 to 658 has biased composition (polar residues); it reads QSSGSTTNVASTPD. Phosphothreonine is present on T656. Residues 662 to 782 form an interaction with microtubules, MAPRE1 and MAPRE3 region; sequence RSRAKVVSQS…FGLGQSGRIP (121 aa). Low complexity predominate over residues 673 to 695; sequence RSRSANPAGAGSRSSSPGKLLGS. S684, S688, S695, and S702 each carry phosphoserine. T708 bears the Phosphothreonine mark. Position 711 is a phosphoserine (S711). Polar residues predominate over residues 721–730; it reads QGCSRETSPN. S784, S794, and S820 each carry phosphoserine. Residues 971-1008 form an HEAT 5 repeat; sequence QQFNILMRFIVDQTQTPNLKVKVAILKYIESLARQMDP. A disordered region spans residues 1078-1157; that stretch reads LKNSSNTGVG…APSHKTLRRS (80 aa). Over residues 1079–1094 the composition is skewed to polar residues; it reads KNSSNTGVGSPSNTIG. At S1088 the chain carries Phosphoserine. A phosphothreonine mark is found at T1092 and T1096. A compositionally biased stretch (low complexity) spans 1103 to 1112; sequence SRTSPLTSPT. A phosphoserine mark is found at S1110, F1139, and S1193. Residues 1200-1213 show a composition bias toward basic and acidic residues; sequence PIKRDGKKDCDIVS. Disordered stretches follow at residues 1200-1233 and 1245-1266; these read PIKR…EIEG and LNTQ…PYPY. The residue at position 1220 (S1220) is a Phosphoserine. The interaction with CLIP2 and RSN stretch occupies residues 1251–1535; sequence RAFPGPRARE…SSSSDVSTHS (285 aa). The tract at residues 1251-1535 is interaction with PHLDB2; the sequence is RAFPGPRARE…SSSSDVSTHS (285 aa). The segment at 1253–1535 is localization to kinetochores; that stretch reads FPGPRAREYN…SSSSDVSTHS (283 aa). Residues 1296-1327 adopt a coiled-coil conformation; that stretch reads DHSDLVADLLKELSNHNERVEERKGALLELLK. HEAT repeat units follow at residues 1339–1376 and 1457–1494; these read EHFK…NQPA and QLLV…VIGE.

Belongs to the CLASP family. In terms of assembly, interacts with ERC1, MAPRE1, MAPRE3, microtubules, and PHLDB2. The interaction with ERC1 may be mediated by PHLDB2. Interacts with GCC2; recruits CLASP1 to Golgi membranes. Interacts with CLIP2 and RSN. Interacts with MACF1. Interacts with mtcl2 and MTCL1. In terms of tissue distribution, highly expressed in brain and heart and at lower levels in kidney, lung, skeletal muscle and testis.

It localises to the cytoplasm. It is found in the cytoskeleton. Its subcellular location is the microtubule organizing center. The protein resides in the centrosome. The protein localises to the chromosome. It localises to the centromere. It is found in the kinetochore. Its subcellular location is the spindle. The protein resides in the golgi apparatus. The protein localises to the trans-Golgi network. Functionally, microtubule plus-end tracking protein that promotes the stabilization of dynamic microtubules. Involved in the nucleation of noncentrosomal microtubules originating from the trans-Golgi network (TGN). Required for the polarization of the cytoplasmic microtubule arrays in migrating cells towards the leading edge of the cell. May act at the cell cortex to enhance the frequency of rescue of depolymerizing microtubules by attaching their plus-ends to cortical platforms composed of ERC1 and PHLDB2. This cortical microtubule stabilizing activity is regulated at least in part by phosphatidylinositol 3-kinase signaling. Also performs a similar stabilizing function at the kinetochore which is essential for the bipolar alignment of chromosomes on the mitotic spindle. The protein is CLIP-associating protein 1 (Clasp1) of Mus musculus (Mouse).